The primary structure comprises 519 residues: Alkaline phosphatase, tissue-nonspecific isozyme (519 aa).

Positions M1–S16 are cleaved as a signal peptide. D59 serves as a coordination point for Mg(2+). Residues D59 and S109 each contribute to the Zn(2+) site. The active-site Phosphoserine intermediate is the S109. The cysteines at positions 138 and 200 are disulfide-linked. N139 carries N-linked (GlcNAc...) asparagine glycosylation. T172 serves as a coordination point for Mg(2+). An N-linked (GlcNAc...) asparagine glycan is attached at N229. Position 234 (E234) interacts with Ca(2+). N278 is a glycosylation site (N-linked (GlcNAc...) asparagine). The Ca(2+) site is built by F289 and E290. A glycan (N-linked (GlcNAc...) asparagine) is linked at N302. D305 contributes to the Ca(2+) binding site. Mg(2+) is bound at residue E331. Zn(2+) is bound by residues D336, H340, D377, and H378. The N-linked (GlcNAc...) asparagine glycan is linked to N429. Residue H453 coordinates Zn(2+). C488 and C496 form a disulfide bridge. The GPI-anchor amidated serine moiety is linked to residue S498. Positions A499–C519 are cleaved as a propeptide — removed in mature form.

Belongs to the alkaline phosphatase family. In terms of assembly, homodimer. Mg(2+) is required as a cofactor. It depends on Zn(2+) as a cofactor. Ca(2+) serves as cofactor.

The protein localises to the cell membrane. It is found in the extracellular vesicle membrane. The catalysed reaction is a phosphate monoester + H2O = an alcohol + phosphate. It carries out the reaction diphosphate + H2O = 2 phosphate + H(+). It catalyses the reaction pyridoxal 5'-phosphate + H2O = pyridoxal + phosphate. The enzyme catalyses phosphoethanolamine + H2O = ethanolamine + phosphate. The catalysed reaction is ATP + H2O = ADP + phosphate + H(+). It carries out the reaction ADP + H2O = AMP + phosphate + H(+). It catalyses the reaction AMP + H2O = adenosine + phosphate. Alkaline phosphatase that metabolizes various phosphate compounds and plays a key role in skeletal mineralization and adaptive thermogenesis. Has broad substrate specificity and can hydrolyze a considerable variety of compounds: however, only a few substrates, such as diphosphate (inorganic pyrophosphate; PPi) and pyridoxal 5'-phosphate (PLP) are natural substrates. Plays an essential role in skeletal and dental mineralization via its ability to hydrolyze extracellular diphosphate, a potent mineralization inhibitor, to phosphate: it thereby promotes hydroxyapatite crystal formation and increases inorganic phosphate concentration. Catalyzes dephosphorylation of PLP to pyridoxal (PL), the transportable form of vitamin B6, in order to provide a sufficient amount of PLP in the brain, an essential cofactor for enzymes catalyzing the synthesis of diverse neurotransmitters. Additionally, also able to mediate ATP degradation in a stepwise manner to adenosine, thereby regulating the availability of ligands for purinergic receptors. Involved in the establishment and growth of feather germs. The sequence is that of Alkaline phosphatase, tissue-nonspecific isozyme (ALPL) from Gallus gallus (Chicken).